Here is a 449-residue protein sequence, read N- to C-terminus: Ribulose bisphosphate carboxylase large chain (449 aa).

The residue at position 5 (Lys5) is an N6,N6,N6-trimethyllysine. 2 residues coordinate substrate: Asn114 and Thr164. Catalysis depends on Lys166, which acts as the Proton acceptor. Substrate is bound at residue Lys168. Mg(2+)-binding residues include Lys192, Asp194, and Glu195. Lys192 carries the post-translational modification N6-carboxylysine. His285 (proton acceptor) is an active-site residue. Arg286, His318, and Ser370 together coordinate substrate.

This sequence belongs to the RuBisCO large chain family. Type I subfamily. In terms of assembly, heterohexadecamer of 8 large chains and 8 small chains; disulfide-linked. The disulfide link is formed within the large subunit homodimers. Mg(2+) is required as a cofactor. The disulfide bond which can form in the large chain dimeric partners within the hexadecamer appears to be associated with oxidative stress and protein turnover.

The protein resides in the plastid. Its subcellular location is the chloroplast. It carries out the reaction 2 (2R)-3-phosphoglycerate + 2 H(+) = D-ribulose 1,5-bisphosphate + CO2 + H2O. The catalysed reaction is D-ribulose 1,5-bisphosphate + O2 = 2-phosphoglycolate + (2R)-3-phosphoglycerate + 2 H(+). Its function is as follows. RuBisCO catalyzes two reactions: the carboxylation of D-ribulose 1,5-bisphosphate, the primary event in carbon dioxide fixation, as well as the oxidative fragmentation of the pentose substrate in the photorespiration process. Both reactions occur simultaneously and in competition at the same active site. The sequence is that of Ribulose bisphosphate carboxylase large chain from Zamioculcas zamiifolia (Aroid palm).